Here is a 161-residue protein sequence, read N- to C-terminus: DNA-binding protein inhibitor ID-4 (161 aa).

The 53-residue stretch at Ala-52–Leu-104 folds into the bHLH domain. A disordered region spans residues Arg-116–Arg-161. Over residues Gln-117–His-126 the composition is skewed to pro residues.

As to quaternary structure, heterodimer with other HLH proteins.

Its subcellular location is the nucleus. Its function is as follows. Transcriptional regulator (lacking a basic DNA binding domain) which negatively regulates the basic helix-loop-helix (bHLH) transcription factors by forming heterodimers and inhibiting their DNA binding and transcriptional activity. Implicated in regulating a variety of cellular processes, including cellular growth, senescence, differentiation, apoptosis, angiogenesis, and neoplastic transformation. The chain is DNA-binding protein inhibitor ID-4 (ID4) from Sus scrofa (Pig).